The chain runs to 518 residues: MAFVLAETPAGYALLKASDKKIHKSSTLIEDLNTLEKVVDQFKVHRFEKFQSAANALEEVNAIIEGKVSENLKKLLEDSKADKKATLIVSEAKLGNAINKLGLNFQVVSDSASLDLHRAIKEYLPELLPGLDQSALNQMSLGLAHSIGRHKLKFSADKVDTMIIQAIALLDDLDKELNTYAMRCKEWYGWHFPELAKMITDSVAYARIILTMGVRSNASEVDLSEILPEEIEEQVKTAAEVSMGTEITENDLENIKALAEQIVDFAAYREQLSNYLSSRMKAIAPNLTAMVGDLVGARFIAHAGSLTSLAKAPASTIQILGAEKALFRALKTKHDTPKYGIIYHASLVGQASGKNKGRIARTLAAKAALSVRYDCFDEERDDSDSFGLDNRGKVESRLSKLEGRDMRTTSKVSRQQGKIDITEARAYNADADAPSAVADADSDDDDSETEEVEVKSDDKKEKKEKKEKKEKKEKKEKKEKKEKKEKKEKSDKKRKRDDDAEESSKLKKDKKSKKSKKD.

The 121-residue stretch at 283–403 (IAPNLTAMVG…VESRLSKLEG (121 aa)) folds into the Nop domain. The disordered stretch occupies residues 400-518 (KLEGRDMRTT…DKKSKKSKKD (119 aa)). Residues 440 to 451 (ADSDDDDSETEE) show a composition bias toward acidic residues. Positions 452 to 461 (VEVKSDDKKE) are enriched in basic and acidic residues. Basic residues predominate over residues 462–484 (KKEKKEKKEKKEKKEKKEKKEKK). A compositionally biased stretch (basic and acidic residues) spans 485–506 (EKKEKSDKKRKRDDDAEESSKL). Residues 507 to 518 (KKDKKSKKSKKD) show a composition bias toward basic residues.

It belongs to the NOP5/NOP56 family.

The protein resides in the nucleus. It is found in the nucleolus. Its function is as follows. Required for pre-18S rRNA processing. May bind microtubules. This chain is Nucleolar protein 58 (NOP58), found in Lodderomyces elongisporus (strain ATCC 11503 / CBS 2605 / JCM 1781 / NBRC 1676 / NRRL YB-4239) (Yeast).